Consider the following 397-residue polypeptide: Iripin-2 (397 aa).

Positions 1 to 21 are cleaved as a signal peptide; it reads MEDFKMKTLAAFLSLLVLCWA. Residues asparagine 109 and asparagine 270 are each glycosylated (N-linked (GlcNAc...) asparagine).

Belongs to the serpin family. In terms of assembly, interacts with mouse MCPT4. Female salivary gland. Ovary. Midgut.

It localises to the secreted. Serine protease inhibitor that modulates blood feeding of ticks on vertebrate species. Inhibits host trypsin, thrombin (F2), alpha-chymotrypsin, cathepsin G (CTSG) and mast cell chymase (CMA1). Inhibits host cathepsin G- and thrombin-induced platelet aggregation. Inhibits acute inflammation in the host. Suppresses neutrophil recruitment in inflamed area. Does not inhibit host plasmin (PLG), factor Xa (F10), factor XIa (F11), elastase and proteinase 3/myeloblastin (PRTN3). In terms of biological role, (Microbial infection) Inhibits IL6 production by mouse splenic dendritic cells in response to Borrelia burgdorferi exposure. Decreases levels of STAT3 phosphorylation in mouse splenic dendritic cells in response to Borrelia burgdorferi exposure and in Borrelia-primed CD4+ T-lymphocytes. Inhibits differentiation of mouse Th17 cells, a subset of CD4+ T-lymphocytes that play a crucial role in protection against extracellular bacteria, in response to Borrelia burgdorferi exposure via inhibition of the IL6/STAT3 signaling pathway. The chain is Iripin-2 from Ixodes ricinus (Common tick).